A 322-amino-acid polypeptide reads, in one-letter code: Olfactory receptor 11L1 (322 aa).

The Extracellular segment spans residues 1 to 25 (MEPQNTSTVTNFQLLGFQNLLEWQA). An N-linked (GlcNAc...) asparagine glycan is attached at asparagine 5. A helical transmembrane segment spans residues 26–46 (LLFVIFLLIYCLTIIGNVVII). At 47 to 54 (TVVSQGLR) the chain is on the cytoplasmic side. Residues 55–75 (LHSPMYMFLQHLSFLEVWYTS) form a helical membrane-spanning segment. Topologically, residues 76–99 (TTVPLLLANLLSWGQAISFSACMA) are extracellular. An intrachain disulfide couples cysteine 97 to cysteine 189. The helical transmembrane segment at 100-120 (QLYFFVFLGATECFLLAFMAY) threads the bilayer. Over 121–139 (DRYLAICSPLRYPFLMHRG) the chain is Cytoplasmic. The helical transmembrane segment at 140 to 160 (LCARLVVVSWCTGVSTGFLPS) threads the bilayer. Residues 161-197 (LMISRLDFCGRNQINHFFCDLPPLMQLSCSRVYITEV) are Extracellular-facing. Residues 198-217 (TIFILSIAVLCICFFLTLGP) traverse the membrane as a helical segment. The Cytoplasmic portion of the chain corresponds to 218 to 237 (YVFIVSSILRIPSTSGRRKT). A helical membrane pass occupies residues 238-258 (FSTCGSHLAVVTLYYGTMISM). Residues 259 to 271 (YVCPSPHLLPEIN) are Extracellular-facing. The chain crosses the membrane as a helical span at residues 272 to 292 (KIISVFYTVVTPLLNPVIYSL). Topologically, residues 293-322 (RNKDFKEAVRKVMRRKCGILWSTSKRKFLY) are cytoplasmic.

It belongs to the G-protein coupled receptor 1 family.

It is found in the cell membrane. Its function is as follows. Odorant receptor. The polypeptide is Olfactory receptor 11L1 (OR11L1) (Homo sapiens (Human)).